The primary structure comprises 161 residues: Small ribosomal subunit protein uS9 (161 aa).

Disordered stretches follow at residues 1-27 (MAQI…APKA) and 142-161 (KERK…FSKR).

The protein belongs to the universal ribosomal protein uS9 family.

The protein is Small ribosomal subunit protein uS9 of Clavibacter michiganensis subsp. michiganensis (strain NCPPB 382).